Consider the following 197-residue polypeptide: Transmembrane 4 L6 family member 5 (197 aa).

Topologically, residues 1–9 are cytoplasmic; it reads MCTGKCARC. Residues 10 to 30 form a helical membrane-spanning segment; it reads VGLSLITLCLVCIVANALLLV. At 31 to 46 the chain is on the extracellular side; that stretch reads PNGETSWTNTNHLSLQ. A helical transmembrane segment spans residues 47–67; that stretch reads VWLMGGFIGGGLMVLCPGIAA. At 68-90 the chain is on the cytoplasmic side; that stretch reads VRAGGKGCCGAGCCGNRCRMLRS. A helical transmembrane segment spans residues 91 to 111; the sequence is VFSSAFGVLGAIYCLSVSGAG. Residues 91-197 are interaction with MTOR and CASTOR1; it reads VFSSAFGVLG…DCRKKQDTPH (107 aa). The Extracellular portion of the chain corresponds to 112–157; that stretch reads LRNGPRCLMNGEWGYHFEDTAGAYLLNRTLWDRCEAPPRVVPWNVT. Residue 124–129 coordinates L-arginine; sequence WGYHFE. Residues Asn-138 and Asn-155 are each glycosylated (N-linked (GlcNAc...) asparagine). Residues 158-178 traverse the membrane as a helical segment; sequence LFSLLVAASCLEIVLCGIQLV. Topologically, residues 179-197 are cytoplasmic; the sequence is NATIGVFCGDCRKKQDTPH.

Belongs to the L6 tetraspanin family. As to quaternary structure, interacts with MTOR; the interaction is positively regulated by arginine and is negatively regulated by leucine. Interacts with SLC38A9. Interacts with SLC7A1; the interaction is negatively regulated by arginine. Interacts with CASTOR1; the interaction is positively regulated by leucine and is negatively regulated by arginine. In terms of tissue distribution, intestine. Overexpressed in pancreatic cancers.

It localises to the lysosome membrane. The protein resides in the cell membrane. Functionally, acts as a lysosomal membrane arginine sensor. Forms a complex with MTOR and SLC38A9 on lysosomal membranes in an arginine-regulated manner, leading to arginine efflux which enables the activation of mTORC1 which subsequently leads to RPS6KB1 and EIF4EBP1 phosphorylations. Facilitates cell cycle G1/S phase progression and the translocation of the CDK4-CCND1 complex into the nucleus. CDKN1B and RHOA/ROCK signaling activity are involved in TM4SF5-mediated acceleration of G1/S phase progression. This Homo sapiens (Human) protein is Transmembrane 4 L6 family member 5 (TM4SF5).